Reading from the N-terminus, the 403-residue chain is TBC1 domain family member 20 (403 aa).

The interval 1–29 (MALRSARGDGPTSGRWDGGAEKGDFNAKR) is disordered. The segment covering 18–27 (GGAEKGDFNA) has biased composition (basic and acidic residues). The region spanning 60–246 (LLTDEIRRKV…RLYDFFLACH (187 aa)) is the Rab-GAP TBC domain. Transmembrane regions (helical) follow at residues 238–258 (LYDFFLACHPLMPIYFAAVIV) and 367–387 (FVKLAVMGLTVALGAAALAVV).

Its subcellular location is the membrane. Functionally, GTPase-activating protein (GAP) specific for Rab1 and Rab2 small GTPase families for which it can accelerate the intrinsic GTP hydrolysis rate by more than five orders of magnitude. Also shows GAP activity for RAB18 GTPase. Promotes RAB18 dissociation from the endoplasmic reticulum (ER) membrane into the cytosol, probably through stimulating RAB18 GTP-hydrolysis. Involved in maintaining endoplasmic reticulum structure. The chain is TBC1 domain family member 20 (TBC1D20) from Bos taurus (Bovine).